The chain runs to 544 residues: Chaperonin GroEL 4 (544 aa).

ATP is bound by residues 30 to 33 (TLGP), lysine 51, 87 to 91 (DGTTT), glycine 415, and aspartate 496.

The protein belongs to the chaperonin (HSP60) family. As to quaternary structure, forms a cylinder of 14 subunits composed of two heptameric rings stacked back-to-back. Interacts with the co-chaperonin GroES.

It localises to the cytoplasm. The catalysed reaction is ATP + H2O + a folded polypeptide = ADP + phosphate + an unfolded polypeptide.. Together with its co-chaperonin GroES, plays an essential role in assisting protein folding. The GroEL-GroES system forms a nano-cage that allows encapsulation of the non-native substrate proteins and provides a physical environment optimized to promote and accelerate protein folding. The chain is Chaperonin GroEL 4 from Sinorhizobium medicae (strain WSM419) (Ensifer medicae).